The following is a 905-amino-acid chain: DNA mismatch repair protein MutS (905 aa).

The tract at residues 389-410 (ERPANPEGTYPTDAETSGDTLP) is disordered. 638 to 645 (GPNMAGKS) contributes to the ATP binding site. A disordered region spans residues 826-847 (RDAARGTNSAPSRQTLPGLDLP). Residues 831–840 (GTNSAPSRQT) are compositionally biased toward polar residues.

This sequence belongs to the DNA mismatch repair MutS family.

This protein is involved in the repair of mismatches in DNA. It is possible that it carries out the mismatch recognition step. This protein has a weak ATPase activity. The protein is DNA mismatch repair protein MutS of Nitratidesulfovibrio vulgaris (strain ATCC 29579 / DSM 644 / CCUG 34227 / NCIMB 8303 / VKM B-1760 / Hildenborough) (Desulfovibrio vulgaris).